Consider the following 241-residue polypeptide: Major microneme antigen (241 aa).

The first 34 residues, 1 to 34 (MTLPIHFPRCVLYGMASAVWSILFLHILVGDTMS), serve as a signal peptide directing secretion. Residues 35–103 (AADALSWSGG…ATGRGPSFVH (69 aa)) constitute a propeptide that is removed on maturation. Positions 64–83 (GKELEQQHGGEEQQMQRDTK) are enriched in basic and acidic residues. A disordered region spans residues 64–90 (GKELEQQHGGEEQQMQRDTKPAAFSNP). PAN domains follow at residues 112–181 (CFPH…PRSC) and 185–241 (CTDN…VERA). 6 disulfide bridges follow: C112–C181, C137–C159, C141–C147, C185–C189, C210–C230, and C214–C220. An a carbohydrate-binding site is contributed by S121. A carbohydrate is bound by residues K162, Y169, and D174.

The protein belongs to the microneme antigen family. Homodimer or heterodimer of major microneme antigen and microneme antigen. Post-translationally, contains six disulfide bonds.

It localises to the cytoplasmic vesicle. The protein localises to the secretory vesicle. The protein resides in the microneme. Its function is as follows. Galactose-binding lectin. Plays a role in adhesion to the host cell. Has a potential role in invasion of host cells. In Sarcocystis muris, this protein is Major microneme antigen.